The primary structure comprises 250 residues: Probable transcriptional regulatory protein ROP_68700 (250 aa).

This sequence belongs to the TACO1 family.

It is found in the cytoplasm. The protein is Probable transcriptional regulatory protein ROP_68700 of Rhodococcus opacus (strain B4).